The primary structure comprises 257 residues: MPASMFSIDNILAARPRCKDSVLPVAPSAAAPVVFPALHGDSLYGASGGASSDYGAFYPRPVAPGGAGLQAAVGGSRLGYNNYFYGQLHVQAAPVGPACCGAVPPLGAQQCSCVPTPPGYEGPGSVLVSPVPHQMLPYMNVGTLSRTELQLLNQLHCRRKRRHRTIFTDEQLEALENLFQETKYPDVGTREQLARKVHLREEKVEVWFKNRRAKWRRQKRSSSEESENAEKWNKTSSSKASPEKREEEGKSDLDSDS.

A DNA-binding region (homeobox) is located at residues 160-219 (KRRHRTIFTDEQLEALENLFQETKYPDVGTREQLARKVHLREEKVEVWFKNRRAKWRRQK). The segment at 213–257 (AKWRRQKRSSSEESENAEKWNKTSSSKASPEKREEEGKSDLDSDS) is disordered. Positions 241–257 (SPEKREEEGKSDLDSDS) are enriched in basic and acidic residues.

Belongs to the paired homeobox family. Bicoid subfamily.

Its subcellular location is the nucleus. In terms of biological role, regulates chordin (CHRD). May play a role in spatial programing within discrete embryonic fields or lineage compartments during organogenesis. In concert with NKX3-2, plays a role in defining the structural components of the middle ear; required for the development of the entire tympanic ring. Probably involved in the regulatory networks that define neural crest cell fate specification and determine mesoderm cell lineages in mammals. The sequence is that of Homeobox protein goosecoid (GSC) from Saguinus labiatus (Red-chested mustached tamarin).